Consider the following 325-residue polypeptide: MKTIAFDVMGNDFGPQAAVQASLEFVQKNPDFQIILVGDKKEIEKFTKETSQIKILESPNIASSKDGLRQVSKMENSMNSALDLVVEKKADAVLSSGDSGAYLTSALLKVKRLKGILRPAFMPIFPTIVKDKKILVLDVGANLETKVEYLIQWTKLASIFSNKILKVKNPKCALVNIGVEDYKGFDFHKQANEELKQSNANYIGFLEPRNILDGKVDVAVVDGYGGNLILKSMEGAVLALKKVIKESITKTFFRKILALFLKKAFKDAAERLDYRNVGAAWVLGLNGIVVKSHGSNDFKAYLGALEQVKQGINAKVIDVFRETLE.

Belongs to the PlsX family. In terms of assembly, homodimer. Probably interacts with PlsY.

The protein resides in the cytoplasm. The catalysed reaction is a fatty acyl-[ACP] + phosphate = an acyl phosphate + holo-[ACP]. It participates in lipid metabolism; phospholipid metabolism. Its function is as follows. Catalyzes the reversible formation of acyl-phosphate (acyl-PO(4)) from acyl-[acyl-carrier-protein] (acyl-ACP). This enzyme utilizes acyl-ACP as fatty acyl donor, but not acyl-CoA. The protein is Phosphate acyltransferase of Mycoplasmopsis pulmonis (strain UAB CTIP) (Mycoplasma pulmonis).